The chain runs to 211 residues: tRNA (guanine-N(7)-)-methyltransferase (211 aa).

Residues glutamate 43, aspartate 68, asparagine 95, and asparagine 117 each coordinate S-adenosyl-L-methionine. Residue lysine 121 coordinates substrate. Positions 123–128 are interaction with RNA; that stretch reads RHNKRR. Residues aspartate 153 and 190 to 193 each bind substrate; that span reads TEYE.

Belongs to the class I-like SAM-binding methyltransferase superfamily. TrmB family.

The enzyme catalyses guanosine(46) in tRNA + S-adenosyl-L-methionine = N(7)-methylguanosine(46) in tRNA + S-adenosyl-L-homocysteine. It functions in the pathway tRNA modification; N(7)-methylguanine-tRNA biosynthesis. In terms of biological role, catalyzes the formation of N(7)-methylguanine at position 46 (m7G46) in tRNA. The polypeptide is tRNA (guanine-N(7)-)-methyltransferase (Clostridium tetani (strain Massachusetts / E88)).